The sequence spans 1131 residues: Homeobox-DDT domain protein RLT3 (1131 aa).

Residues 2-56 (KRKSPLQVQALEGFYLEQMYPTPKEMEDLGKSLGLTLKEVRGWFKRRRSRGKGVK) constitute a DNA-binding region (homeobox; TALE-type). Over residues 239-251 (LQKRSTEKKRRSI) the composition is skewed to basic residues. The segment at 239-264 (LQKRSTEKKRRSIHREAELNKDETQR) is disordered. Over residues 252–264 (HREAELNKDETQR) the composition is skewed to basic and acidic residues. The DDT domain maps to 365–424 (PESVKKLFKVVHFLYTYSVTLDIGPFTLDEFTRAFHDKDSLLLGKIHLSLLKLLLLDVET). The tract at residues 579 to 609 (EDPDKSQSDSDDSGSVDDESDDCSISSGDEI) is disordered. The span at 587 to 600 (DSDDSGSVDDESDD) shows a compositional bias: acidic residues.

It localises to the nucleus. In terms of biological role, transcriptional regulator required for the maintenance of the plant vegetative phase. May prevent the early activation of the vegetative-to-reproductive transition by regulating key genes that contribute to flower timing. The polypeptide is Homeobox-DDT domain protein RLT3 (Arabidopsis thaliana (Mouse-ear cress)).